The primary structure comprises 245 residues: 1-(5-phosphoribosyl)-5-[(5-phosphoribosylamino)methylideneamino] imidazole-4-carboxamide isomerase (245 aa).

The Proton acceptor role is filled by D8. D130 serves as the catalytic Proton donor.

It belongs to the HisA/HisF family.

It localises to the cytoplasm. The catalysed reaction is 1-(5-phospho-beta-D-ribosyl)-5-[(5-phospho-beta-D-ribosylamino)methylideneamino]imidazole-4-carboxamide = 5-[(5-phospho-1-deoxy-D-ribulos-1-ylimino)methylamino]-1-(5-phospho-beta-D-ribosyl)imidazole-4-carboxamide. It participates in amino-acid biosynthesis; L-histidine biosynthesis; L-histidine from 5-phospho-alpha-D-ribose 1-diphosphate: step 4/9. The sequence is that of 1-(5-phosphoribosyl)-5-[(5-phosphoribosylamino)methylideneamino] imidazole-4-carboxamide isomerase from Pseudomonas entomophila (strain L48).